The following is a 337-amino-acid chain: Serpentine receptor class delta-50 (337 aa).

Helical transmembrane passes span 10–30 (VLILTIFYNAYFLLAISSQLL), 48–68 (IYLFNILGLQFISTFSAFVLQ), 107–127 (VLFHILQTSLIACATALIIAF), 147–167 (QLVISYCVPLVFLICEVLSPN), 202–222 (SSQTLMLMIGLYGTPFIALVF), 250–270 (GLTLQTLLPLICYCPGFTYYI), and 280–300 (LFVEFAVSPYGFVYTIFDPLL).

The protein belongs to the nematode receptor-like protein srd family.

It is found in the membrane. This Caenorhabditis elegans protein is Serpentine receptor class delta-50.